Consider the following 299-residue polypeptide: Phosphoribosylaminoimidazole-succinocarboxamide synthase (299 aa).

The protein belongs to the SAICAR synthetase family.

It carries out the reaction 5-amino-1-(5-phospho-D-ribosyl)imidazole-4-carboxylate + L-aspartate + ATP = (2S)-2-[5-amino-1-(5-phospho-beta-D-ribosyl)imidazole-4-carboxamido]succinate + ADP + phosphate + 2 H(+). Its pathway is purine metabolism; IMP biosynthesis via de novo pathway; 5-amino-1-(5-phospho-D-ribosyl)imidazole-4-carboxamide from 5-amino-1-(5-phospho-D-ribosyl)imidazole-4-carboxylate: step 1/2. This chain is Phosphoribosylaminoimidazole-succinocarboxamide synthase, found in Streptomyces coelicolor (strain ATCC BAA-471 / A3(2) / M145).